We begin with the raw amino-acid sequence, 350 residues long: Dihydroorotase (350 aa).

Positions 17 and 19 each coordinate Zn(2+). Substrate contacts are provided by residues 19 to 21 (HLR) and Asn-45. The Zn(2+) site is built by Lys-103, His-140, and His-178. Residue Lys-103 is modified to N6-carboxylysine. His-140 is a substrate binding site. Residue Leu-224 coordinates substrate. Asp-252 is a binding site for Zn(2+). The active site involves Asp-252. His-256 and Ala-268 together coordinate substrate.

The protein belongs to the metallo-dependent hydrolases superfamily. DHOase family. Class II DHOase subfamily. In terms of assembly, homodimer. The cofactor is Zn(2+).

The catalysed reaction is (S)-dihydroorotate + H2O = N-carbamoyl-L-aspartate + H(+). It participates in pyrimidine metabolism; UMP biosynthesis via de novo pathway; (S)-dihydroorotate from bicarbonate: step 3/3. In terms of biological role, catalyzes the reversible cyclization of carbamoyl aspartate to dihydroorotate. The chain is Dihydroorotase from Buchnera aphidicola subsp. Acyrthosiphon pisum (strain APS) (Acyrthosiphon pisum symbiotic bacterium).